Here is a 1367-residue protein sequence, read N- to C-terminus: Protein patched homolog 3 (1367 aa).

The Cytoplasmic portion of the chain corresponds to 1–97 (MSFPDEETDL…WLFRIGCFVQ (97 aa)). Residues 98–118 (RWAWSTIFISLFLYCLCLGGL) form a helical membrane-spanning segment. Residues 119–625 (RHVTIETDLV…IADMLEEFSQ (507 aa)) lie on the Extracellular side of the membrane. Residues Asn235, Asn310, Asn454, and Asn591 are each glycosylated (N-linked (GlcNAc...) asparagine). Residues 626 to 646 (FNYIIIVIGYILMVIYAAFTQ) form a helical membrane-spanning segment. One can recognise an SSD domain in the interval 627-788 (NYIIIVIGYI…MFIFPAMIGI (162 aa)). Residues 647-659 (GRFQGWWLAVQSN) are Cytoplasmic-facing. Residues 660–680 (VALAICGVILVTISSICGLGF) form a helical membrane-spanning segment. Topologically, residues 681 to 694 (ATHLGINFNAATTQ) are extracellular. A helical membrane pass occupies residues 695-715 (VVPFLSLGLGIDDMFLLLHNY). The Cytoplasmic segment spans residues 716–737 (DEIINICNKNEIGVLLKETGMS). A helical transmembrane segment spans residues 738-758 (VMLTSINNILAFISGYVLPIP). Residues 759–767 (ALRSFCSQT) lie on the Extracellular side of the membrane. A helical transmembrane segment spans residues 768-788 (AILLAFNLIFLMFIFPAMIGI). Over 789–863 (DLRRQRKGKR…KIYIPALKNN (75 aa)) the chain is Cytoplasmic. Residues 864-884 (VVKACVLIGTTTAVVFGLYGM) form a helical membrane-spanning segment. The Extracellular portion of the chain corresponds to 885-1143 (YTSTLGLELA…WEQYLTLRWN (259 aa)). The helical transmembrane segment at 1144–1164 (LFQAICIIALAVFCVISILMF) threads the bilayer. At 1165–1171 (NPWAATL) the chain is on the cytoplasmic side. A helical membrane pass occupies residues 1172 to 1192 (IMCIVVITTIELGGFMGLMGI). Residues 1193–1199 (KMNPISA) are Extracellular-facing. The chain crosses the membrane as a helical span at residues 1200–1220 (VTLICAVGIGVEFTAHVELAF). At 1221–1237 (LTALGTIDQRLESCLQH) the chain is on the cytoplasmic side. Residues 1238–1258 (MFVPVYHGAISTFLGVVMLVF) form a helical membrane-spanning segment. The Extracellular segment spans residues 1259-1273 (SEFDFVVTYFFYTMT). The helical transmembrane segment at 1274-1294 (LLVALGVFNGLCVLPVILTLV) threads the bilayer. Topologically, residues 1295-1367 (GPKPELTPTD…SDDESSPAHK (73 aa)) are cytoplasmic. A disordered region spans residues 1302-1367 (PTDGSSVLPP…SDDESSPAHK (66 aa)). Low complexity predominate over residues 1346–1356 (RDSPSTSSASH).

This sequence belongs to the patched family. In males, expressed in the precursor and mature sensory rays, the cloaca, and pre-anal ganglia and cephalic neurons. Also expressed in five cells in the valve region between the seminal vesicle and vas deferens of the somatic gonad.

Its subcellular location is the apical cell membrane. The protein localises to the cell junction. It is found in the adherens junction. Regulates osmosis during embryonic development. Required for larval development and in particular is involved in larval molting. The polypeptide is Protein patched homolog 3 (Caenorhabditis elegans).